Reading from the N-terminus, the 178-residue chain is 6,7-dimethyl-8-ribityllumazine synthase (178 aa).

5-amino-6-(D-ribitylamino)uracil contacts are provided by residues phenylalanine 23, 61 to 63, and 85 to 87; these read SFE and AVI. (2S)-2-hydroxy-3-oxobutyl phosphate is bound at residue 90 to 91; sequence QT. The Proton donor role is filled by histidine 93. Tyrosine 118 is a 5-amino-6-(D-ribitylamino)uracil binding site. Position 132 (arginine 132) interacts with (2S)-2-hydroxy-3-oxobutyl phosphate.

Belongs to the DMRL synthase family.

It carries out the reaction (2S)-2-hydroxy-3-oxobutyl phosphate + 5-amino-6-(D-ribitylamino)uracil = 6,7-dimethyl-8-(1-D-ribityl)lumazine + phosphate + 2 H2O + H(+). It participates in cofactor biosynthesis; riboflavin biosynthesis; riboflavin from 2-hydroxy-3-oxobutyl phosphate and 5-amino-6-(D-ribitylamino)uracil: step 1/2. Catalyzes the formation of 6,7-dimethyl-8-ribityllumazine by condensation of 5-amino-6-(D-ribitylamino)uracil with 3,4-dihydroxy-2-butanone 4-phosphate. This is the penultimate step in the biosynthesis of riboflavin. This Thermosynechococcus vestitus (strain NIES-2133 / IAM M-273 / BP-1) protein is 6,7-dimethyl-8-ribityllumazine synthase.